The chain runs to 155 residues: UPF0303 protein lp_3613 (155 aa).

The protein belongs to the UPF0303 family.

In Lactiplantibacillus plantarum (strain ATCC BAA-793 / NCIMB 8826 / WCFS1) (Lactobacillus plantarum), this protein is UPF0303 protein lp_3613.